The following is a 183-amino-acid chain: ATP synthase subunit delta (183 aa).

The protein belongs to the ATPase delta chain family. F-type ATPases have 2 components, F(1) - the catalytic core - and F(0) - the membrane proton channel. F(1) has five subunits: alpha(3), beta(3), gamma(1), delta(1), epsilon(1). F(0) has three main subunits: a(1), b(2) and c(10-14). The alpha and beta chains form an alternating ring which encloses part of the gamma chain. F(1) is attached to F(0) by a central stalk formed by the gamma and epsilon chains, while a peripheral stalk is formed by the delta and b chains.

The protein localises to the cell inner membrane. F(1)F(0) ATP synthase produces ATP from ADP in the presence of a proton or sodium gradient. F-type ATPases consist of two structural domains, F(1) containing the extramembraneous catalytic core and F(0) containing the membrane proton channel, linked together by a central stalk and a peripheral stalk. During catalysis, ATP synthesis in the catalytic domain of F(1) is coupled via a rotary mechanism of the central stalk subunits to proton translocation. Its function is as follows. This protein is part of the stalk that links CF(0) to CF(1). It either transmits conformational changes from CF(0) to CF(1) or is implicated in proton conduction. This Ruthia magnifica subsp. Calyptogena magnifica protein is ATP synthase subunit delta.